A 410-amino-acid polypeptide reads, in one-letter code: Serine hydroxymethyltransferase (410 aa).

(6S)-5,6,7,8-tetrahydrofolate contacts are provided by residues leucine 116 and 120 to 122 (GHL). Lysine 225 bears the N6-(pyridoxal phosphate)lysine mark.

The protein belongs to the SHMT family. In terms of assembly, homodimer. Pyridoxal 5'-phosphate is required as a cofactor.

Its subcellular location is the cytoplasm. It carries out the reaction (6R)-5,10-methylene-5,6,7,8-tetrahydrofolate + glycine + H2O = (6S)-5,6,7,8-tetrahydrofolate + L-serine. The protein operates within one-carbon metabolism; tetrahydrofolate interconversion. It functions in the pathway amino-acid biosynthesis; glycine biosynthesis; glycine from L-serine: step 1/1. In terms of biological role, catalyzes the reversible interconversion of serine and glycine with tetrahydrofolate (THF) serving as the one-carbon carrier. This reaction serves as the major source of one-carbon groups required for the biosynthesis of purines, thymidylate, methionine, and other important biomolecules. Also exhibits THF-independent aldolase activity toward beta-hydroxyamino acids, producing glycine and aldehydes, via a retro-aldol mechanism. This is Serine hydroxymethyltransferase from Lacticaseibacillus casei (strain BL23) (Lactobacillus casei).